The sequence spans 298 residues: Ethanolamine ammonia-lyase small subunit (298 aa).

Adenosylcob(III)alamin contacts are provided by valine 210, glutamate 231, and cysteine 261.

Belongs to the EutC family. In terms of assembly, the basic unit is a heterodimer which dimerizes to form tetramers. The heterotetramers trimerize; 6 large subunits form a core ring with 6 small subunits projecting outwards. It depends on adenosylcob(III)alamin as a cofactor.

It is found in the bacterial microcompartment. It catalyses the reaction ethanolamine = acetaldehyde + NH4(+). The protein operates within amine and polyamine degradation; ethanolamine degradation. Its function is as follows. Catalyzes the deamination of various vicinal amino-alcohols to oxo compounds. Allows this organism to utilize ethanolamine as the sole source of nitrogen and carbon in the presence of external vitamin B12. The polypeptide is Ethanolamine ammonia-lyase small subunit (Salmonella schwarzengrund (strain CVM19633)).